The sequence spans 1873 residues: SAGA complex subunit Spt20 (1873 aa).

This sequence belongs to the SPT20 family. In terms of assembly, component of the Spt-Ada-Gcn5 acetyltransferase (SAGA) complex consisting of wda/Taf5L, Saf6, Taf9, Taf10b, Taf12, Ada1, Spt3, Spt7, Spt20, Sf3b3, Sf3b5, Nipped-A/Tra1, a histone acetyltransferase (HAT) module made up of Gcn5, Ada2b (Isoform B), Ada3 and Sgf29, and a deubiquitinase (DUB) module made up of not/nonstop, Sgf11 and e(y)2 tethered to SAGA by Atxn7.

The protein localises to the nucleus. In terms of biological role, component of the transcription regulatory complex SAGA, a multiprotein complex that activates transcription by remodeling chromatin and mediating histone acetylation and deubiquitination. The SAGA complex predominantly acetylates histone H3. This is SAGA complex subunit Spt20 from Drosophila melanogaster (Fruit fly).